The sequence spans 213 residues: Uracil phosphoribosyltransferase (213 aa).

Residues Arg-78, Arg-103, and 130 to 138 contribute to the 5-phospho-alpha-D-ribose 1-diphosphate site; that span reads DPMLATGGT. Residues Ile-197 and 202–204 each bind uracil; that span reads GDA. Asp-203 lines the 5-phospho-alpha-D-ribose 1-diphosphate pocket.

It belongs to the UPRTase family. Mg(2+) is required as a cofactor.

It catalyses the reaction UMP + diphosphate = 5-phospho-alpha-D-ribose 1-diphosphate + uracil. It participates in pyrimidine metabolism; UMP biosynthesis via salvage pathway; UMP from uracil: step 1/1. Its activity is regulated as follows. Allosterically activated by GTP. Its function is as follows. Catalyzes the conversion of uracil and 5-phospho-alpha-D-ribose 1-diphosphate (PRPP) to UMP and diphosphate. In Nocardioides sp. (strain ATCC BAA-499 / JS614), this protein is Uracil phosphoribosyltransferase.